The following is a 642-amino-acid chain: Mini-chromosome maintenance complex-binding protein (642 aa).

Residues 151–161 (ARVSPSTSYTP) are compositionally biased toward polar residues. A disordered region spans residues 151–188 (ARVSPSTSYTPSRHKRSYEDDEDMDLQPNKQKDQHMGA). Ser-154 bears the Phosphoserine mark. Thr-160 carries the post-translational modification Phosphothreonine. Residues Ser-167 and Ser-298 each carry the phosphoserine modification.

The protein belongs to the MCMBP family. Interacts with the MCM complex: associates with the MCM3-7 complex which lacks MCM2, while it does not interact with the MCM complex when MCM2 is present (MCM2-7 complex). Interacts with the RPA complex, when composed of all RPA1, RPA2 and RPA3 components, but not with RPA1 or RPA2 alone.

Its subcellular location is the nucleus. Its function is as follows. Associated component of the MCM complex that acts as a regulator of DNA replication. Binds to the MCM complex during late S phase and promotes the disassembly of the MCM complex from chromatin, thereby acting as a key regulator of pre-replication complex (pre-RC) unloading from replicated DNA. Can dissociate the MCM complex without addition of ATP; probably acts by destabilizing interactions of each individual subunits of the MCM complex. Required for sister chromatid cohesion. This chain is Mini-chromosome maintenance complex-binding protein (MCMBP), found in Bos taurus (Bovine).